The primary structure comprises 166 residues: MLGRRIFSPAPNRGFILCNLIQSNNSTRRGFSDNRKFNERNSEASSNVGFQRRVRSNIPSYLSASVEEGDIYSPNDLLFETVKAKNQAKFYEPVREDCFKTVNENPMNYWKNPVILSRFVTELGRIKPRGDTGLTAKNQRLLSRAIRRARAAGIMPTKYKSVYSEN.

The N-terminal 31 residues, 1 to 31, are a transit peptide targeting the mitochondrion; sequence MLGRRIFSPAPNRGFILCNLIQSNNSTRRGF. Residues 29–48 are disordered; it reads RGFSDNRKFNERNSEASSNV. The segment covering 30 to 42 has biased composition (basic and acidic residues); that stretch reads GFSDNRKFNERNS.

Belongs to the bacterial ribosomal protein bS18 family. As to quaternary structure, component of the mitochondrial small ribosomal subunit (mt-SSU). Mature yeast 74S mitochondrial ribosomes consist of a small (37S) and a large (54S) subunit. The 37S small subunit contains a 15S ribosomal RNA (15S mt-rRNA) and at least 32 different proteins. The 54S large subunit contains a 21S rRNA (21S mt-rRNA) and at least 45 different proteins.

The protein localises to the mitochondrion. Functionally, component of the mitochondrial ribosome (mitoribosome), a dedicated translation machinery responsible for the synthesis of mitochondrial genome-encoded proteins, including at least some of the essential transmembrane subunits of the mitochondrial respiratory chain. The mitoribosomes are attached to the mitochondrial inner membrane and translation products are cotranslationally integrated into the membrane. This chain is Small ribosomal subunit protein bS18m (rsm18), found in Schizosaccharomyces pombe (strain 972 / ATCC 24843) (Fission yeast).